Consider the following 101-residue polypeptide: Small ribosomal subunit protein uS14 (101 aa).

The protein belongs to the universal ribosomal protein uS14 family. Part of the 30S ribosomal subunit. Contacts proteins S3 and S10.

Its function is as follows. Binds 16S rRNA, required for the assembly of 30S particles and may also be responsible for determining the conformation of the 16S rRNA at the A site. In Cereibacter sphaeroides (strain ATCC 17029 / ATH 2.4.9) (Rhodobacter sphaeroides), this protein is Small ribosomal subunit protein uS14.